The sequence spans 437 residues: Trigger factor (437 aa).

A PPIase FKBP-type domain is found at 163-248 (GHMVTIDYAF…LNEIKRKELP (86 aa)).

It belongs to the FKBP-type PPIase family. Tig subfamily.

Its subcellular location is the cytoplasm. The enzyme catalyses [protein]-peptidylproline (omega=180) = [protein]-peptidylproline (omega=0). Functionally, involved in protein export. Acts as a chaperone by maintaining the newly synthesized protein in an open conformation. Functions as a peptidyl-prolyl cis-trans isomerase. This Pelobacter propionicus (strain DSM 2379 / NBRC 103807 / OttBd1) protein is Trigger factor.